A 291-amino-acid polypeptide reads, in one-letter code: Diaminopimelate epimerase (291 aa).

Substrate is bound by residues Asn17, Gln50, and Asn70. Cys79 (proton donor) is an active-site residue. Residues 80-81, Asn167, Asn200, and 218-219 contribute to the substrate site; these read GN and ER. Catalysis depends on Cys227, which acts as the Proton acceptor. Position 228–229 (228–229) interacts with substrate; that stretch reads GS.

This sequence belongs to the diaminopimelate epimerase family. As to quaternary structure, homodimer.

The protein localises to the cytoplasm. It catalyses the reaction (2S,6S)-2,6-diaminopimelate = meso-2,6-diaminopimelate. The protein operates within amino-acid biosynthesis; L-lysine biosynthesis via DAP pathway; DL-2,6-diaminopimelate from LL-2,6-diaminopimelate: step 1/1. In terms of biological role, catalyzes the stereoinversion of LL-2,6-diaminopimelate (L,L-DAP) to meso-diaminopimelate (meso-DAP), a precursor of L-lysine and an essential component of the bacterial peptidoglycan. The sequence is that of Diaminopimelate epimerase from Bradyrhizobium diazoefficiens (strain JCM 10833 / BCRC 13528 / IAM 13628 / NBRC 14792 / USDA 110).